A 228-amino-acid chain; its full sequence is Mediator of RNA polymerase II transcription subunit 7-B (228 aa).

Belongs to the Mediator complex subunit 7 family. Component of the Mediator complex.

The protein resides in the nucleus. Component of the Mediator complex, a coactivator involved in the regulated transcription of nearly all RNA polymerase II-dependent genes. Mediator functions as a bridge to convey information from gene-specific regulatory proteins to the basal RNA polymerase II transcription machinery. Mediator is recruited to promoters by direct interactions with regulatory proteins and serves as a scaffold for the assembly of a functional preinitiation complex with RNA polymerase II and the general transcription factors. This Xenopus laevis (African clawed frog) protein is Mediator of RNA polymerase II transcription subunit 7-B (med7-b).